The primary structure comprises 579 residues: Glutamine--tRNA ligase (579 aa).

The 'HIGH' region motif lies at 41 to 51; sequence PEPNGYLHIGH. Residues 42-44 and 48-54 contribute to the ATP site; these read EPN and HIGHAKA. 2 residues coordinate L-glutamine: Asp-74 and Tyr-218. ATP contacts are provided by residues Thr-237, 285–286, and 293–295; these read RL and MSK. The 'KMSKS' region signature appears at 292–296; sequence VMSKR.

The protein belongs to the class-I aminoacyl-tRNA synthetase family. Monomer.

It is found in the cytoplasm. It carries out the reaction tRNA(Gln) + L-glutamine + ATP = L-glutaminyl-tRNA(Gln) + AMP + diphosphate. The polypeptide is Glutamine--tRNA ligase (Xanthomonas oryzae pv. oryzae (strain MAFF 311018)).